The primary structure comprises 243 residues: Type III pantothenate kinase (243 aa).

6-13 is a binding site for ATP; that stretch reads DIGNTVAK. Substrate is bound by residues Tyr-86 and 93-96; that span reads GYDR. Residue Asp-95 is the Proton acceptor of the active site. Asp-116 is a binding site for K(+). Residue Thr-119 coordinates ATP. Residue Thr-171 participates in substrate binding.

It belongs to the type III pantothenate kinase family. As to quaternary structure, homodimer. It depends on NH4(+) as a cofactor. The cofactor is K(+).

The protein localises to the cytoplasm. The enzyme catalyses (R)-pantothenate + ATP = (R)-4'-phosphopantothenate + ADP + H(+). It functions in the pathway cofactor biosynthesis; coenzyme A biosynthesis; CoA from (R)-pantothenate: step 1/5. Catalyzes the phosphorylation of pantothenate (Pan), the first step in CoA biosynthesis. This Bacteroides fragilis (strain ATCC 25285 / DSM 2151 / CCUG 4856 / JCM 11019 / LMG 10263 / NCTC 9343 / Onslow / VPI 2553 / EN-2) protein is Type III pantothenate kinase.